Reading from the N-terminus, the 149-residue chain is Transcription factor Atoh7 (149 aa).

One can recognise a bHLH domain in the interval 41–93 (RRRLAANARERRRMQGLNTAFDRLRRVVPQWGQDKKLSKYETLQMALSYIIAL).

In terms of assembly, forms a heterodimer with TCF3 isoform E47; interaction may be required for DNA-binding in certain situations. In terms of tissue distribution, expressed in retinal ganglion cells. Expressed in the cerebellum, trapezoid body, ventral nucleus of the lateral lamniscus and in areas of the auditory hindbrain such as the cochlear nucleus, lateral superior olive and medial nucleus of the trapezoid body. Expressed in the modiolar nerve root and in the cochlear in a small group of bushy neurons within the acoustic nerve. Expressed weakly in the sensory epithelia of the saccule and utricle.

The protein resides in the nucleus. The protein localises to the perikaryon. It localises to the cell projection. Its subcellular location is the axon. Its function is as follows. Transcription factor that binds to DNA at the consensus sequence 5'-CAG[GC]TG-3'. Dimerization with TCF3 isoform E47 may be required in certain situations. Binds to gene promoters and enhancer elements, and thereby regulates a transcriptional program of retinal ganglion cell (RGC) determinant genes. Although the exact mechanism is not certain, retinal transcription regulation by ATOH7 has a role in RGC determination and survival, photoreceptor population development, targeting of RGC axons to the optic nerve and development of the retino-hypothalamic tract. Binds to its own promoter and enhancer sequences, suggesting autoregulation of ATOH7 transcription. Required for retinal circadian rhythm photoentrainment. Plays a role in brainstem auditory signaling and binaural processing. The polypeptide is Transcription factor Atoh7 (Mus musculus (Mouse)).